The sequence spans 508 residues: GMP synthase [glutamine-hydrolyzing] (508 aa).

Residues 1–189 enclose the Glutamine amidotransferase type-1 domain; it reads MILVLDFGSQ…ALLVCGCEKT (189 aa). The Nucleophile role is filled by Cys78. Catalysis depends on residues His163 and Glu165. Positions 190 to 383 constitute a GMPS ATP-PPase domain; sequence WGMQHFAQRE…LGVSQDFLMR (194 aa). ATP is bound at residue 217–223; that stretch reads SGGVDST.

Homodimer.

It catalyses the reaction XMP + L-glutamine + ATP + H2O = GMP + L-glutamate + AMP + diphosphate + 2 H(+). Its pathway is purine metabolism; GMP biosynthesis; GMP from XMP (L-Gln route): step 1/1. Its function is as follows. Catalyzes the synthesis of GMP from XMP. This is GMP synthase [glutamine-hydrolyzing] (guaA) from Helicobacter pylori (strain ATCC 700392 / 26695) (Campylobacter pylori).